We begin with the raw amino-acid sequence, 344 residues long: Molybdate/tungstate import ATP-binding protein WtpC (344 aa).

In terms of domain architecture, ABC transporter spans 2–231 (LRVESVSKDY…PVDEGVARFL (230 aa)). 33 to 40 (GPSGAGKT) contributes to the ATP binding site. Positions 280 to 344 (KTSARNEFRA…SFKTSAIKVF (65 aa)) constitute a Mop domain.

This sequence belongs to the ABC transporter superfamily. Sulfate/tungstate importer (TC 3.A.1.6) family. As to quaternary structure, the complex is composed of two ATP-binding proteins (WtpC), two transmembrane proteins (WtpB) and a solute-binding protein (WtpA).

It is found in the cell membrane. The enzyme catalyses tungstate(in) + ATP + H2O = tungstate(out) + ADP + phosphate + H(+). In terms of biological role, part of the ABC transporter complex WtpABC involved in molybdate/tungstate import. Responsible for energy coupling to the transport system. The chain is Molybdate/tungstate import ATP-binding protein WtpC (wtpC) from Pyrococcus abyssi (strain GE5 / Orsay).